Consider the following 469-residue polypeptide: Serine carboxypeptidase-like 41 (469 aa).

The N-terminal stretch at 1–20 (MAIVSLRDVAMVMVTVQVFA) is a signal peptide. 3 disulfide bridges follow: C83-C342, C243-C260, and C285-C310. N134 is a glycosylation site (N-linked (GlcNAc...) asparagine). S175 is a catalytic residue. Residue N255 is glycosylated (N-linked (GlcNAc...) asparagine). N-linked (GlcNAc...) asparagine glycosylation is found at N331 and N347. Catalysis depends on residues D379 and H436. N461 is a glycosylation site (N-linked (GlcNAc...) asparagine).

Belongs to the peptidase S10 family. Expressed in flowers.

The protein resides in the secreted. Its function is as follows. Probable carboxypeptidase. This Arabidopsis thaliana (Mouse-ear cress) protein is Serine carboxypeptidase-like 41 (SCPL41).